Consider the following 259-residue polypeptide: uncharacterized protein (259 aa).

An N-terminal signal peptide occupies residues 1 to 22 (MKHSKKLLLCISFLLITVFISG). The N-palmitoyl cysteine moiety is linked to residue C23. Residue C23 is the site of S-diacylglycerol cysteine attachment.

Belongs to the staphylococcal tandem lipoprotein family.

The protein localises to the cell membrane. This is an uncharacterized protein from Staphylococcus epidermidis (strain ATCC 35984 / DSM 28319 / BCRC 17069 / CCUG 31568 / BM 3577 / RP62A).